A 72-amino-acid chain; its full sequence is uncharacterized protein (72 aa).

The next 2 membrane-spanning stretches (helical) occupy residues Trp-15 to Ile-35 and Ile-50 to Ile-70.

The protein resides in the host membrane. This is an uncharacterized protein from Spiroplasma melliferum (SpV1).